We begin with the raw amino-acid sequence, 75 residues long: Penaeidin-3k (75 aa).

A signal peptide spans 1–19; sequence MRLVVCLVFLASFALVCQG. Gln20 carries the pyrrolidone carboxylic acid modification. Disulfide bonds link Cys44–Cys59, Cys48–Cys66, and Cys60–Cys67. Residue Ser74 is modified to Serine amide.

It belongs to the penaeidin family.

The protein resides in the cytoplasmic granule. Antibacterial and antifungal activity. Presents chitin-binding activity. This is Penaeidin-3k from Penaeus setiferus (Atlantic white shrimp).